The chain runs to 369 residues: tRNA 2-selenouridine synthase (369 aa).

The 124-residue stretch at 15-138 (FIAGQPLIDL…MRQYLIGVIE (124 aa)) folds into the Rhodanese domain. The active-site S-selanylcysteine intermediate is cysteine 98.

It belongs to the SelU family. Monomer.

It carries out the reaction 5-methylaminomethyl-2-thiouridine(34) in tRNA + selenophosphate + (2E)-geranyl diphosphate + H2O + H(+) = 5-methylaminomethyl-2-selenouridine(34) in tRNA + (2E)-thiogeraniol + phosphate + diphosphate. It catalyses the reaction 5-methylaminomethyl-2-thiouridine(34) in tRNA + (2E)-geranyl diphosphate = 5-methylaminomethyl-S-(2E)-geranyl-thiouridine(34) in tRNA + diphosphate. The enzyme catalyses 5-methylaminomethyl-S-(2E)-geranyl-thiouridine(34) in tRNA + selenophosphate + H(+) = 5-methylaminomethyl-2-(Se-phospho)selenouridine(34) in tRNA + (2E)-thiogeraniol. The catalysed reaction is 5-methylaminomethyl-2-(Se-phospho)selenouridine(34) in tRNA + H2O = 5-methylaminomethyl-2-selenouridine(34) in tRNA + phosphate. In terms of biological role, involved in the post-transcriptional modification of the uridine at the wobble position (U34) of tRNA(Lys), tRNA(Glu) and tRNA(Gln). Catalyzes the conversion of 2-thiouridine (S2U-RNA) to 2-selenouridine (Se2U-RNA). Acts in a two-step process involving geranylation of 2-thiouridine (S2U) to S-geranyl-2-thiouridine (geS2U) and subsequent selenation of the latter derivative to 2-selenouridine (Se2U) in the tRNA chain. This Shewanella sp. (strain MR-7) protein is tRNA 2-selenouridine synthase.